Here is a 336-residue protein sequence, read N- to C-terminus: UDP-N-acetylenolpyruvoylglucosamine reductase (336 aa).

The FAD-binding PCMH-type domain maps to Met-1 to Glu-178. Arg-154 is a catalytic residue. The active-site Proton donor is Ser-222. Glu-318 is an active-site residue.

Belongs to the MurB family. The cofactor is FAD.

It is found in the cytoplasm. It carries out the reaction UDP-N-acetyl-alpha-D-muramate + NADP(+) = UDP-N-acetyl-3-O-(1-carboxyvinyl)-alpha-D-glucosamine + NADPH + H(+). It functions in the pathway cell wall biogenesis; peptidoglycan biosynthesis. Cell wall formation. The polypeptide is UDP-N-acetylenolpyruvoylglucosamine reductase (Pseudoalteromonas translucida (strain TAC 125)).